The primary structure comprises 398 residues: DNA-directed RNA polymerase III subunit RPC4 (398 aa).

The disordered stretch occupies residues Met1–Ala114. Residue Ser2 is modified to N-acetylserine. Ser42 is subject to Phosphoserine. Residues Lys66–Pro100 show a composition bias toward basic and acidic residues. Glycyl lysine isopeptide (Lys-Gly) (interchain with G-Cter in SUMO2) cross-links involve residues Lys68 and Lys78. 3 positions are modified to omega-N-methylarginine: Arg95, Arg97, and Arg99. Glycyl lysine isopeptide (Lys-Gly) (interchain with G-Cter in SUMO2) cross-links involve residues Lys141, Lys152, Lys160, Lys190, Lys199, Lys206, Lys220, Lys285, Lys302, Lys310, and Lys396. The interval Lys220–Gly244 is disordered.

It belongs to the eukaryotic RPC4/POLR3D RNA polymerase subunit family. In terms of assembly, component of the RNA polymerase III complex consisting of 17 subunits: a ten-subunit horseshoe-shaped catalytic core composed of POLR3A/RPC1, POLR3B/RPC2, POLR1C/RPAC1, POLR1D/RPAC2, POLR3K/RPC10, POLR2E/RPABC1, POLR2F/RPABC2, POLR2H/RPABC3, POLR2K/RPABC4 and POLR2L/RPABC5; a mobile stalk composed of two subunits POLR3H/RPC8 and CRCP/RPC9, protruding from the core and functioning primarily in transcription initiation; and additional subunits homologous to general transcription factors of the RNA polymerase II machinery, POLR3C/RPC3-POLR3F/RPC6-POLR3G/RPC7 heterotrimer required for transcription initiation and POLR3D/RPC4-POLR3E/RPC5 heterodimer involved in both transcription initiation and termination. In terms of processing, sumoylation on Lys-141 can serve as a signal to mark misfolded Pol III for proteasomal degradation.

It is found in the nucleus. Its function is as follows. DNA-dependent RNA polymerase catalyzes the transcription of DNA into RNA using the four ribonucleoside triphosphates as substrates. Specific peripheric component of RNA polymerase III (Pol III) which synthesizes small non-coding RNAs including 5S rRNA, snRNAs, tRNAs and miRNAs from at least 500 distinct genomic loci. Assembles with POLR3E/RPC5 forming a subcomplex that binds the Pol III core. Enables recruitment of Pol III at transcription initiation site and drives transcription initiation from both type 2 and type 3 DNA promoters. Required for efficient transcription termination and reinitiation. Pol III plays a key role in sensing and limiting infection by intracellular bacteria and DNA viruses. Acts as nuclear and cytosolic DNA sensor involved in innate immune response. Can sense non-self dsDNA that serves as template for transcription into dsRNA. The non-self RNA polymerase III transcripts, such as Epstein-Barr virus-encoded RNAs (EBERs) induce type I interferon and NF-kappa-B through the RIG-I pathway. The polypeptide is DNA-directed RNA polymerase III subunit RPC4 (Homo sapiens (Human)).